A 37-amino-acid polypeptide reads, in one-letter code: Defensin-A (37 aa).

Intrachain disulfides connect Cys4–Cys25, Cys10–Cys33, and Cys14–Cys35.

It localises to the secreted. In terms of biological role, has antibacterial activity against M.luteus and E.coli. This chain is Defensin-A, found in Mytilus edulis (Blue mussel).